The chain runs to 494 residues: Glycerol kinase (494 aa).

T13 is an ADP binding site. 3 residues coordinate ATP: T13, T14, and S15. Residue T13 participates in sn-glycerol 3-phosphate binding. R17 is an ADP binding site. Sn-glycerol 3-phosphate contacts are provided by R83, E84, Y135, and D244. 5 residues coordinate glycerol: R83, E84, Y135, D244, and Q245. Positions 266 and 309 each coordinate ADP. The ATP site is built by T266, G309, Q313, and G410. Positions 410 and 414 each coordinate ADP.

This sequence belongs to the FGGY kinase family.

The catalysed reaction is glycerol + ATP = sn-glycerol 3-phosphate + ADP + H(+). It functions in the pathway polyol metabolism; glycerol degradation via glycerol kinase pathway; sn-glycerol 3-phosphate from glycerol: step 1/1. Its activity is regulated as follows. Inhibited by fructose 1,6-bisphosphate (FBP). In terms of biological role, key enzyme in the regulation of glycerol uptake and metabolism. Catalyzes the phosphorylation of glycerol to yield sn-glycerol 3-phosphate. In Shewanella sp. (strain MR-4), this protein is Glycerol kinase.